The primary structure comprises 51 residues: Small ribosomal subunit protein eS31 (51 aa).

Zn(2+)-binding residues include cysteine 21, cysteine 24, cysteine 39, and cysteine 42. The C4-type zinc finger occupies 21–42 (CPRCGPGVFLAEHEDRFSCGRC).

The protein belongs to the eukaryotic ribosomal protein eS31 family. As to quaternary structure, part of the 30S ribosomal subunit. It depends on Zn(2+) as a cofactor.

The polypeptide is Small ribosomal subunit protein eS31 (Picrophilus torridus (strain ATCC 700027 / DSM 9790 / JCM 10055 / NBRC 100828 / KAW 2/3)).